The following is a 36-amino-acid chain: Photosystem I reaction center subunit VIII (36 aa).

The helical transmembrane segment at 6–26 threads the bilayer; sequence LPSIFVPLVGLVFPAIAMASL.

Belongs to the PsaI family.

It is found in the plastid. Its subcellular location is the chloroplast thylakoid membrane. Its function is as follows. May help in the organization of the PsaL subunit. This chain is Photosystem I reaction center subunit VIII, found in Drimys granadensis.